We begin with the raw amino-acid sequence, 372 residues long: N-methyl-L-tryptophan oxidase (372 aa).

FAD is bound at residue 4–34 (DLIIIGSGSVGAAAGYYATRAGLKVLMTDAH). At cysteine 307 the chain carries S-8alpha-FAD cysteine.

This sequence belongs to the MSOX/MTOX family. MTOX subfamily. In terms of assembly, monomer. Requires FAD as cofactor.

It catalyses the reaction N(alpha)-methyl-L-tryptophan + O2 + H2O = L-tryptophan + formaldehyde + H2O2. Functionally, catalyzes the oxidative demethylation of N-methyl-L-tryptophan. In Salmonella typhimurium (strain LT2 / SGSC1412 / ATCC 700720), this protein is N-methyl-L-tryptophan oxidase.